Consider the following 302-residue polypeptide: Stanniocalcin-2 (302 aa).

An N-terminal signal peptide occupies residues 1–24 (MCAERLGQFMTLALVLATFDPARG). The interval 23–44 (RGTDATNPPEGPQDRSSQQKGR) is disordered. Asn73 is a glycosylation site (N-linked (GlcNAc...) asparagine). Positions 217–302 (KPPTAPPERQ…EQSEYSDIRR (86 aa)) are disordered. A compositionally biased stretch (basic and acidic residues) spans 227–264 (PQVDRTKLSRAHHGEAGHHLPEPSSRETGRGAKGERGS). A phosphoserine; by FAM20C mark is found at Ser250 and Ser251. Thr254 is modified (phosphothreonine; by FAM20C).

Belongs to the stanniocalcin family. Homodimer; disulfide-linked. As to expression, expressed in a variety of tissues including muscle, heart, pancreas, kidney, spleen, prostate, small intestine, colon and peripheral blood leukocytes.

The protein resides in the secreted. Has an anti-hypocalcemic action on calcium and phosphate homeostasis. The sequence is that of Stanniocalcin-2 (STC2) from Homo sapiens (Human).